The following is an 82-amino-acid chain: UPF0154 protein SMU_1719c (82 aa).

The chain crosses the membrane as a helical span at residues 4–24 (FLWILLVIIALLAGLVGGTFI).

The protein belongs to the UPF0154 family.

It is found in the membrane. The protein is UPF0154 protein SMU_1719c of Streptococcus mutans serotype c (strain ATCC 700610 / UA159).